A 538-amino-acid polypeptide reads, in one-letter code: uncharacterized protein (538 aa).

The first 17 residues, 1-17 (MSFSATILFSPPSGSEA), serve as a signal peptide directing secretion. The segment at 101–131 (RQGKVSIPDEDGESRAHSSPPEEPGPLKESP) is disordered. Residues lysine 128 and lysine 221 each participate in a glycyl lysine isopeptide (Lys-Gly) (interchain with G-Cter in SUMO2) cross-link. Serine 224 is modified (phosphoserine). The tract at residues 233–253 (RATPETGPENGTKLPPPRPED) is disordered. A phosphoserine mark is found at serine 285 and serine 428. Positions 488-523 (LPPELYNPNFQEEEDEGGDENAPGSPSFDQPHKTCC) are disordered.

Its subcellular location is the secreted. This is an uncharacterized protein from Homo sapiens (Human).